We begin with the raw amino-acid sequence, 461 residues long: Nuclear distribution protein PAC1 (461 aa).

Residues 64–93 (NSIIRLHRKILDLEQKCQQLTEELEAVPTE) adopt a coiled-coil conformation. WD repeat units lie at residues 118 to 157 (DVGA…MPLH), 161 to 203 (AHMK…AFQL), 209 to 252 (SHEH…KSFQ), 254 to 292 (HNQW…SMAV), 318 to 362 (DDQV…FIPH), 382 to 421 (GHTS…KVWP), and 423 to 461 (ASHG…VFMR).

This sequence belongs to the WD repeat LIS1/nudF family. Self-associates. Interacts with NDL1 and dynein.

It localises to the cytoplasm. It is found in the cytoskeleton. The protein localises to the spindle pole. Positively regulates the activity of the minus-end directed microtubule motor protein dynein. Plays a central role in positioning the mitotic spindle at the bud neck during cell division. Targets cytoplasmic dynein to microtubule plus ends, thereby promoting dynein-mediated microtubule sliding along the bud cortex and consequently the movement of the mitotic spindle to the bud neck. This Eremothecium gossypii (strain ATCC 10895 / CBS 109.51 / FGSC 9923 / NRRL Y-1056) (Yeast) protein is Nuclear distribution protein PAC1.